Consider the following 49-residue polypeptide: uncharacterized protein (49 aa).

This is an uncharacterized protein from Sinorhizobium fredii (strain NBRC 101917 / NGR234).